Here is a 101-residue protein sequence, read N- to C-terminus: NAD(P)H-quinone oxidoreductase subunit 4L, chloroplastic (101 aa).

Helical transmembrane passes span 2 to 22 (MLEHILVLSAYLFSIGIYGLI), 32 to 52 (MCLELILNAVNINFVTFSDFF), and 61 to 81 (IFSIFVIAIAAAEAAIGSAIV).

It belongs to the complex I subunit 4L family. NDH is composed of at least 16 different subunits, 5 of which are encoded in the nucleus.

Its subcellular location is the plastid. The protein localises to the chloroplast thylakoid membrane. The catalysed reaction is a plastoquinone + NADH + (n+1) H(+)(in) = a plastoquinol + NAD(+) + n H(+)(out). It carries out the reaction a plastoquinone + NADPH + (n+1) H(+)(in) = a plastoquinol + NADP(+) + n H(+)(out). Functionally, NDH shuttles electrons from NAD(P)H:plastoquinone, via FMN and iron-sulfur (Fe-S) centers, to quinones in the photosynthetic chain and possibly in a chloroplast respiratory chain. The immediate electron acceptor for the enzyme in this species is believed to be plastoquinone. Couples the redox reaction to proton translocation, and thus conserves the redox energy in a proton gradient. The polypeptide is NAD(P)H-quinone oxidoreductase subunit 4L, chloroplastic (Gossypium hirsutum (Upland cotton)).